Consider the following 80-residue polypeptide: HssA/B-like protein 2 (80 aa).

The segment at 1-29 is disordered; that stretch reads MSLLSALTSISKPMNTSSKSSVSSKNVSG. Positions 9-29 are enriched in low complexity; the sequence is SISKPMNTSSKSSVSSKNVSG.

Belongs to the hssA/B family.

This Dictyostelium discoideum (Social amoeba) protein is HssA/B-like protein 2 (hssl2).